Here is a 183-residue protein sequence, read N- to C-terminus: Peptide deformylase (183 aa).

Positions 110 and 153 each coordinate Fe cation. Residue E154 is part of the active site. A Fe cation-binding site is contributed by H157.

This sequence belongs to the polypeptide deformylase family. Fe(2+) serves as cofactor.

It carries out the reaction N-terminal N-formyl-L-methionyl-[peptide] + H2O = N-terminal L-methionyl-[peptide] + formate. Removes the formyl group from the N-terminal Met of newly synthesized proteins. Requires at least a dipeptide for an efficient rate of reaction. N-terminal L-methionine is a prerequisite for activity but the enzyme has broad specificity at other positions. In Oceanobacillus iheyensis (strain DSM 14371 / CIP 107618 / JCM 11309 / KCTC 3954 / HTE831), this protein is Peptide deformylase.